A 624-amino-acid chain; its full sequence is Bifunctional protein ArgH (624 aa).

Residues 1-466 are argininosuccinate lyase; sequence MALWGGRFSQ…QERDNAGVKV (466 aa). Residues 464–614 enclose the N-acetyltransferase domain; that stretch reads VKVRPARLTD…DEVALEVNLQ (151 aa). Positions 467 to 624 are probable acetyltransferase; that stretch reads RPARLTDLDA…EQVIIKSSVA (158 aa).

In the N-terminal section; belongs to the lyase 1 family. Argininosuccinate lyase subfamily.

It is found in the cytoplasm. It catalyses the reaction 2-(N(omega)-L-arginino)succinate = fumarate + L-arginine. The protein operates within amino-acid biosynthesis; L-arginine biosynthesis; L-arginine from L-ornithine and carbamoyl phosphate: step 3/3. This Aliivibrio fischeri (strain ATCC 700601 / ES114) (Vibrio fischeri) protein is Bifunctional protein ArgH (argH).